Here is a 274-residue protein sequence, read N- to C-terminus: 3-methyl-2-oxobutanoate hydroxymethyltransferase (274 aa).

D49 and D88 together coordinate Mg(2+). 3-methyl-2-oxobutanoate is bound by residues 49 to 50 (DS), D88, and K118. E120 is a binding site for Mg(2+). E187 serves as the catalytic Proton acceptor.

The protein belongs to the PanB family. As to quaternary structure, homodecamer; pentamer of dimers. It depends on Mg(2+) as a cofactor.

Its subcellular location is the cytoplasm. It carries out the reaction 3-methyl-2-oxobutanoate + (6R)-5,10-methylene-5,6,7,8-tetrahydrofolate + H2O = 2-dehydropantoate + (6S)-5,6,7,8-tetrahydrofolate. It participates in cofactor biosynthesis; (R)-pantothenate biosynthesis; (R)-pantoate from 3-methyl-2-oxobutanoate: step 1/2. Functionally, catalyzes the reversible reaction in which hydroxymethyl group from 5,10-methylenetetrahydrofolate is transferred onto alpha-ketoisovalerate to form ketopantoate. This is 3-methyl-2-oxobutanoate hydroxymethyltransferase from Rhodopseudomonas palustris (strain BisB5).